The chain runs to 611 residues: Probable methyltransferase PMT1 (611 aa).

Residues 1 to 11 are Cytoplasmic-facing; that stretch reads MRGRSEGGKKK. A helical; Signal-anchor for type II membrane protein membrane pass occupies residues 12 to 32; that stretch reads PVIVLLCVASVVLVFVYLFFG. Topologically, residues 33–611 are lumenal; that stretch reads SSNHKAIEYG…LTSESLRDLE (579 aa). N345 carries an N-linked (GlcNAc...) asparagine glycan.

This sequence belongs to the methyltransferase superfamily.

The protein localises to the golgi apparatus membrane. The chain is Probable methyltransferase PMT1 from Arabidopsis thaliana (Mouse-ear cress).